A 1053-amino-acid polypeptide reads, in one-letter code: Probable sucrose-phosphate synthase (1053 aa).

Residues 103–115 show a composition bias toward basic and acidic residues; it reads RRQERERGRREAV. 2 disordered regions span residues 103–127 and 673–693; these read RRQERERGRREAVADMSEDLSEGEK and LRSIDDDDENSETDSPSDSLR.

This sequence belongs to the glycosyltransferase 1 family. In terms of assembly, homodimer or homotetramer.

The enzyme catalyses beta-D-fructose 6-phosphate + UDP-alpha-D-glucose = sucrose 6(F)-phosphate + UDP + H(+). It participates in glycan biosynthesis; sucrose biosynthesis; sucrose from D-fructose 6-phosphate and UDP-alpha-D-glucose: step 1/2. Activity is regulated by phosphorylation and moderated by concentration of metabolites and light. Its function is as follows. Plays a role in photosynthetic sucrose synthesis by catalyzing the rate-limiting step of sucrose biosynthesis from UDP-glucose and fructose- 6-phosphate. Involved in the regulation of carbon partitioning in the leaves of plants. May regulate the synthesis of sucrose and therefore play a major role as a limiting factor in the export of photoassimilates out of the leaf. Plays a role for sucrose availability that is essential for plant growth and fiber elongation. The protein is Probable sucrose-phosphate synthase (SPS) of Solanum tuberosum (Potato).